The chain runs to 161 residues: ATP synthase subunit b (161 aa).

A helical membrane pass occupies residues 2–22; sequence VIEWGTALYQLLAFAVLLLIL.

This sequence belongs to the ATPase B chain family. F-type ATPases have 2 components, F(1) - the catalytic core - and F(0) - the membrane proton channel. F(1) has five subunits: alpha(3), beta(3), gamma(1), delta(1), epsilon(1). F(0) has three main subunits: a(1), b(2) and c(10-14). The alpha and beta chains form an alternating ring which encloses part of the gamma chain. F(1) is attached to F(0) by a central stalk formed by the gamma and epsilon chains, while a peripheral stalk is formed by the delta and b chains.

It is found in the cell membrane. F(1)F(0) ATP synthase produces ATP from ADP in the presence of a proton or sodium gradient. F-type ATPases consist of two structural domains, F(1) containing the extramembraneous catalytic core and F(0) containing the membrane proton channel, linked together by a central stalk and a peripheral stalk. During catalysis, ATP synthesis in the catalytic domain of F(1) is coupled via a rotary mechanism of the central stalk subunits to proton translocation. Its function is as follows. Component of the F(0) channel, it forms part of the peripheral stalk, linking F(1) to F(0). In Shouchella clausii (strain KSM-K16) (Alkalihalobacillus clausii), this protein is ATP synthase subunit b.